Here is a 186-residue protein sequence, read N- to C-terminus: Translation initiation factor IF-3 (186 aa).

The interval 1–20 is disordered; the sequence is MINRNSGKDRDRSRSGDKEL.

Belongs to the IF-3 family. Monomer.

It is found in the cytoplasm. In terms of biological role, IF-3 binds to the 30S ribosomal subunit and shifts the equilibrium between 70S ribosomes and their 50S and 30S subunits in favor of the free subunits, thus enhancing the availability of 30S subunits on which protein synthesis initiation begins. This is Translation initiation factor IF-3 from Borrelia duttonii (strain Ly).